The primary structure comprises 171 residues: Co-chaperone protein HscB (171 aa).

The region spanning 2–74 (DYFTLFGLPA…LTRAEYLLSL (73 aa)) is the J domain.

The protein belongs to the HscB family. In terms of assembly, interacts with HscA and stimulates its ATPase activity. Interacts with IscU.

In terms of biological role, co-chaperone involved in the maturation of iron-sulfur cluster-containing proteins. Seems to help targeting proteins to be folded toward HscA. The chain is Co-chaperone protein HscB from Klebsiella pneumoniae (strain 342).